The sequence spans 253 residues: uncharacterized protein (253 aa).

6–30 (IITASDSGIGKECALLLAQQGFDIG) lines the NADP(+) pocket. Ser-140 is a binding site for substrate. Tyr-153 serves as the catalytic Proton acceptor.

It belongs to the short-chain dehydrogenases/reductases (SDR) family.

This is an uncharacterized protein from Escherichia coli (strain K12).